Consider the following 361-residue polypeptide: Phospho-N-acetylmuramoyl-pentapeptide-transferase (361 aa).

10 consecutive transmembrane segments (helical) span residues Leu-28–Leu-48, Thr-74–Leu-94, Ile-99–Ala-119, Ser-133–Asp-153, Leu-168–Ser-188, Val-203–Ile-223, Thr-236–Phe-256, Val-263–Ile-283, Ile-288–Val-308, and Lys-338–Leu-358.

It belongs to the glycosyltransferase 4 family. MraY subfamily. It depends on Mg(2+) as a cofactor.

It is found in the cell membrane. The enzyme catalyses UDP-N-acetyl-alpha-D-muramoyl-L-alanyl-gamma-D-glutamyl-meso-2,6-diaminopimeloyl-D-alanyl-D-alanine + di-trans,octa-cis-undecaprenyl phosphate = di-trans,octa-cis-undecaprenyl diphospho-N-acetyl-alpha-D-muramoyl-L-alanyl-D-glutamyl-meso-2,6-diaminopimeloyl-D-alanyl-D-alanine + UMP. It participates in cell wall biogenesis; peptidoglycan biosynthesis. Its function is as follows. Catalyzes the initial step of the lipid cycle reactions in the biosynthesis of the cell wall peptidoglycan: transfers peptidoglycan precursor phospho-MurNAc-pentapeptide from UDP-MurNAc-pentapeptide onto the lipid carrier undecaprenyl phosphate, yielding undecaprenyl-pyrophosphoryl-MurNAc-pentapeptide, known as lipid I. This Rickettsia montanensis protein is Phospho-N-acetylmuramoyl-pentapeptide-transferase.